A 290-amino-acid polypeptide reads, in one-letter code: Cilia- and flagella-associated protein 298 (290 aa).

It belongs to the CFAP298 family. As to quaternary structure, interacts with ZMYND10.

The protein resides in the cytoplasm. It localises to the cytoskeleton. The protein localises to the cilium basal body. Its function is as follows. Plays a role in motile cilium function, possibly by acting on outer dynein arm assembly. Seems to be important for initiation rather than maintenance of cilium motility. Required for correct positioning of cilia at the apical cell surface, suggesting an additional role in the planar cell polarity (PCP) pathway. May suppress canonical Wnt signaling activity. The protein is Cilia- and flagella-associated protein 298 of Mus musculus (Mouse).